The sequence spans 130 residues: Modulator protein MzrA (130 aa).

Over methionine 1–leucine 15 the chain is Cytoplasmic. A helical transmembrane segment spans residues serine 16–phenylalanine 36. At arginine 37–glycine 130 the chain is on the periplasmic side.

The protein belongs to the MzrA family. In terms of assembly, interacts with EnvZ.

The protein resides in the cell inner membrane. Its function is as follows. Modulates the activity of the EnvZ/OmpR two-component regulatory system, probably by directly modulating EnvZ enzymatic activity and increasing stability of phosphorylated OmpR. The protein is Modulator protein MzrA of Erwinia tasmaniensis (strain DSM 17950 / CFBP 7177 / CIP 109463 / NCPPB 4357 / Et1/99).